The primary structure comprises 466 residues: MADDKSQIKINFFTNEEDESLHTSDAPLYVPVSLKRYGLSEIVNHLLKKDGETDETKPVPFDFLIDGVLLRTSLEDYLVKNGLSSEASLNLEYTRAVLPPSFLASFNNDDWISSLDTINPLSASVKASNMSISQPKILSGSYDGIVRTYNMSGKVEKQYVGHSGPIRSVKWISPTRIVSSGNDRQVRLWKTSIDSNIEDDEEIEDGRTLAILEGHKAPVVSLAVEYQNNRILSAGYDKAIGFWSTNYREMTTIQPLEYDSNVISTSSKKRRKMALQDSTIRRRSPLSFLEGHSQPVEDVIFDFNDATVGYSVSQDHTIKTWDLVTSRCVDTRTTGYSLLSLLQLPSLNLLVCGSSARHINLFDPRVSSTTTEQTNNQKLIGHTNFVVGLSKCPTNDNMFASCSHDGTVKVWDVRSEKSLYTITREQNNAAKGQDKVFSVIWDNDIGIISGGQDKKIQINKGSDITK.

A ubiquitin-like (UBL) domain region spans residues I8–R95. The segment at S105–K466 is sufficient for interaction with ERB1 and association with 66S pre-ribosomes. WD repeat units follow at residues P120–Y159, G161–D199, G214–I253, G291–T331, T333–E372, G381–T421, and K431–K466.

It belongs to the WD repeat WDR12/YTM1 family. In terms of assembly, component of the NOP7 complex, composed of ERB1, NOP7 and YTM1. The complex is held together by ERB1, which interacts with NOP7 via its N-terminal domain and with YTM1 via a high-affinity interaction between the seven-bladed beta-propeller domains of the 2 proteins. The NOP7 complex associates with the 66S pre-ribosome. Interacts (via UBL domain) with MDN1 (via VWFA/MIDAS domain).

It localises to the nucleus. Its subcellular location is the nucleolus. The protein resides in the nucleoplasm. In terms of biological role, component of the NOP7 complex, which is required for maturation of the 25S and 5.8S ribosomal RNAs and formation of the 60S ribosome. In Debaryomyces hansenii (strain ATCC 36239 / CBS 767 / BCRC 21394 / JCM 1990 / NBRC 0083 / IGC 2968) (Yeast), this protein is Ribosome biogenesis protein YTM1.